A 702-amino-acid chain; its full sequence is Neurochondrin (702 aa).

Belongs to the neurochondrin family.

Its subcellular location is the cytoplasm. It is found in the cytosol. The protein localises to the cell projection. The protein resides in the dendrite. It localises to the postsynapse. Functionally, probably involved in signal transduction, in the nervous system. Required for the spatial learning process. May also be involved in neurite outgrowth. In Gallus gallus (Chicken), this protein is Neurochondrin (NCDN).